A 113-amino-acid polypeptide reads, in one-letter code: Nucleoid-associated protein CLH_3225 (113 aa).

Residues 1–14 (MAKGGFPGGFGGGN) are compositionally biased toward gly residues. The tract at residues 1-31 (MAKGGFPGGFGGGNMNNLMKQAQKLQKQMED) is disordered.

This sequence belongs to the YbaB/EbfC family. As to quaternary structure, homodimer.

It is found in the cytoplasm. The protein localises to the nucleoid. Binds to DNA and alters its conformation. May be involved in regulation of gene expression, nucleoid organization and DNA protection. This Clostridium botulinum (strain Alaska E43 / Type E3) protein is Nucleoid-associated protein CLH_3225.